Reading from the N-terminus, the 343-residue chain is Holliday junction branch migration complex subunit RuvB (343 aa).

The large ATPase domain (RuvB-L) stretch occupies residues 1-182 (MTDPIPLHTP…FGIPVRLNFY (182 aa)). Positions 21, 22, 63, 66, 67, 68, 172, 182, and 219 each coordinate ATP. Thr67 is a binding site for Mg(2+). Residues 183 to 253 (TEEELEKVVT…IADAALTRLE (71 aa)) are small ATPAse domain (RuvB-S). The segment at 256 to 343 (GLGLDAMDRR…SQTGLFDGKS (88 aa)) is head domain (RuvB-H). Arg292, Arg311, and Arg316 together coordinate DNA.

Belongs to the RuvB family. As to quaternary structure, homohexamer. Forms an RuvA(8)-RuvB(12)-Holliday junction (HJ) complex. HJ DNA is sandwiched between 2 RuvA tetramers; dsDNA enters through RuvA and exits via RuvB. An RuvB hexamer assembles on each DNA strand where it exits the tetramer. Each RuvB hexamer is contacted by two RuvA subunits (via domain III) on 2 adjacent RuvB subunits; this complex drives branch migration. In the full resolvosome a probable DNA-RuvA(4)-RuvB(12)-RuvC(2) complex forms which resolves the HJ.

The protein localises to the cytoplasm. The catalysed reaction is ATP + H2O = ADP + phosphate + H(+). In terms of biological role, the RuvA-RuvB-RuvC complex processes Holliday junction (HJ) DNA during genetic recombination and DNA repair, while the RuvA-RuvB complex plays an important role in the rescue of blocked DNA replication forks via replication fork reversal (RFR). RuvA specifically binds to HJ cruciform DNA, conferring on it an open structure. The RuvB hexamer acts as an ATP-dependent pump, pulling dsDNA into and through the RuvAB complex. RuvB forms 2 homohexamers on either side of HJ DNA bound by 1 or 2 RuvA tetramers; 4 subunits per hexamer contact DNA at a time. Coordinated motions by a converter formed by DNA-disengaged RuvB subunits stimulates ATP hydrolysis and nucleotide exchange. Immobilization of the converter enables RuvB to convert the ATP-contained energy into a lever motion, pulling 2 nucleotides of DNA out of the RuvA tetramer per ATP hydrolyzed, thus driving DNA branch migration. The RuvB motors rotate together with the DNA substrate, which together with the progressing nucleotide cycle form the mechanistic basis for DNA recombination by continuous HJ branch migration. Branch migration allows RuvC to scan DNA until it finds its consensus sequence, where it cleaves and resolves cruciform DNA. This Erythrobacter litoralis (strain HTCC2594) protein is Holliday junction branch migration complex subunit RuvB.